A 763-amino-acid chain; its full sequence is Palmitoyltransferase AKR1 (763 aa).

The segment covering 1 to 15 has biased composition (polar residues); it reads MEDNSEQASVSSQAS. A disordered region spans residues 1-59; sequence MEDNSEQASVSSQASMRPLVSDNGDREAGAGVEVNIANDNDTSVGVDGENGNEDDDPIL. Residues 1 to 307 lie on the Cytoplasmic side of the membrane; the sequence is MEDNSEQASV…KLVKRDDHAK (307 aa). 7 ANK repeats span residues 57–87, 92–121, 126–155, 159–188, 197–226, 230–259, and 292–322; these read PILS…NVSS, EGVT…NVES, LEAT…SATT, QGFN…SKGI, KGRT…SVKI, GGFT…DFFQ, and NGYP…GFAF. The helical transmembrane segment at 308 to 325 threads the bilayer; sequence IITFLIPLLVLGFAFFGF. Residues 326 to 330 lie on the Lumenal side of the membrane; it reads SHLHI. A helical transmembrane segment spans residues 331–348; it reads LFALPVIILLLLASNKFI. The Cytoplasmic portion of the chain corresponds to 349 to 368; sequence KSFLLPSYETKGTNSASLLK. The chain crosses the membrane as a helical span at residues 369–389; sequence SPLIAGILFGSIFWLAFVWIL. Over 390-401 the chain is Lumenal; the sequence is RILPYTFTKRPL. A helical membrane pass occupies residues 402-422; the sequence is GNLTFCAILCFVCYSLFLLAF. Residues 423–497 lie on the Cytoplasmic side of the membrane; it reads SDPGHIGSEN…YNDVGLKNHK (75 aa). A DHHC domain is found at 454–504; it reads SFCLETWVRKPLRSKYSYLNDALILRFDHYCPWIYNDVGLKNHKLFIFFIL. The S-palmitoyl cysteine intermediate role is filled by C484. The chain crosses the membrane as a helical span at residues 498 to 518; the sequence is LFIFFILALELGIFSFVKVCL. At 519–546 the chain is on the lumenal side; the sequence is KYFDELDMDGDCFILGDDDLCSGLIGDR. A helical transmembrane segment spans residues 547 to 567; it reads FTFLIMTWACIQAVWIFSLVI. Over 568–763 the chain is Cytoplasmic; it reads VQLFQITKGL…DPLSEIDDMV (196 aa).

The protein belongs to the DHHC palmitoyltransferase family. AKR/ZDHHC17 subfamily.

The protein localises to the early endosome membrane. Its subcellular location is the golgi apparatus membrane. The catalysed reaction is L-cysteinyl-[protein] + hexadecanoyl-CoA = S-hexadecanoyl-L-cysteinyl-[protein] + CoA. Palmitoyltransferase specific for casein kinase 1. The chain is Palmitoyltransferase AKR1 (AKR1) from Candida glabrata (strain ATCC 2001 / BCRC 20586 / JCM 3761 / NBRC 0622 / NRRL Y-65 / CBS 138) (Yeast).